The following is a 430-amino-acid chain: Adenylosuccinate synthetase (430 aa).

GTP is bound by residues 11–17 and 39–41; these read GDEGKGK and GHS. The Proton acceptor role is filled by D12. Residues D12 and G39 each coordinate Mg(2+). IMP contacts are provided by residues 12-15, 37-40, T129, R143, N221, T236, and R300; these read DEGK and NAGH. Catalysis depends on H40, which acts as the Proton donor. Residue 296-302 participates in substrate binding; the sequence is VSTGRKR. Residues R302, 328 to 330, and 412 to 414 each bind GTP; these read KLD and GTG.

The protein belongs to the adenylosuccinate synthetase family. Homodimer. It depends on Mg(2+) as a cofactor.

It is found in the cytoplasm. It catalyses the reaction IMP + L-aspartate + GTP = N(6)-(1,2-dicarboxyethyl)-AMP + GDP + phosphate + 2 H(+). Its pathway is purine metabolism; AMP biosynthesis via de novo pathway; AMP from IMP: step 1/2. Functionally, plays an important role in the de novo pathway and in the salvage pathway of purine nucleotide biosynthesis. Catalyzes the first committed step in the biosynthesis of AMP from IMP. This chain is Adenylosuccinate synthetase, found in Sordaria macrospora (strain ATCC MYA-333 / DSM 997 / K(L3346) / K-hell).